We begin with the raw amino-acid sequence, 466 residues long: 3-isopropylmalate dehydratase large subunit (466 aa).

[4Fe-4S] cluster contacts are provided by C347, C407, and C410.

The protein belongs to the aconitase/IPM isomerase family. LeuC type 1 subfamily. As to quaternary structure, heterodimer of LeuC and LeuD. Requires [4Fe-4S] cluster as cofactor.

The catalysed reaction is (2R,3S)-3-isopropylmalate = (2S)-2-isopropylmalate. Its pathway is amino-acid biosynthesis; L-leucine biosynthesis; L-leucine from 3-methyl-2-oxobutanoate: step 2/4. Functionally, catalyzes the isomerization between 2-isopropylmalate and 3-isopropylmalate, via the formation of 2-isopropylmaleate. This chain is 3-isopropylmalate dehydratase large subunit, found in Escherichia coli O139:H28 (strain E24377A / ETEC).